Reading from the N-terminus, the 209-residue chain is C-type lectin domain family 6 member A (209 aa).

Residues 1–20 (MVQERHPQRKGVCWTLRLWS) are Cytoplasmic-facing. The helical; Signal-anchor for type II membrane protein transmembrane segment at 21-43 (TAVISMLLLSTCFIASCMVTYQF) threads the bilayer. Residues 44-209 (TMEKPNRRLS…SICETKKIYL (166 aa)) lie on the Extracellular side of the membrane. 2 disulfide bridges follow: cysteine 64-cysteine 78 and cysteine 79-cysteine 90. In terms of domain architecture, C-type lectin spans 86–203 (FGSSCYLIST…CDSKHNSICE (118 aa)). 3 residues coordinate Ca(2+): valine 116, asparagine 118, and glutamate 122. The N-linked (GlcNAc...) asparagine glycan is linked to asparagine 131. The Ca(2+) site is built by glutamate 168, asparagine 170, and glutamate 174. Residues 168–170 (EPN), glutamate 174, tryptophan 182, and 190–191 (ND) contribute to the alpha-D-mannopyranose site. Cysteine 176 and cysteine 194 are disulfide-bonded. The Ca(2+) site is built by asparagine 190, aspartate 191, and glutamate 203.

Associated with FCER1G. Heterodimer with CLEC4D; this heterodimer forms a pattern recognition receptor (PRR) against fungal infection.

It localises to the cell membrane. Its function is as follows. Calcium-dependent lectin that acts as a pattern recognition receptor (PRR) of the innate immune system: specifically recognizes and binds alpha-mannans on C.albicans hypheas. Binding of C.albicans alpha-mannans to this receptor complex leads to phosphorylation of the immunoreceptor tyrosine-based activation motif (ITAM) of FCER1G, triggering activation of SYK, CARD9 and NF-kappa-B, consequently driving maturation of antigen-presenting cells and shaping antigen-specific priming of T-cells toward effector T-helper 1 and T-helper 17 cell subtypes. Also recognizes, in a mannose-dependent manner, allergens from house dust mite and fungi, by promoting cysteinyl leukotriene production. Recognizes soluble elements from the eggs of Shistosoma mansoni altering adaptive immune responses. This Rattus norvegicus (Rat) protein is C-type lectin domain family 6 member A (CLEC6A).